Here is a 171-residue protein sequence, read N- to C-terminus: MPRRSRYDDDEERLPEGMTRVGYDADTGVYTFQDSDGSYWEGASGSRYGQLTRVGHELAGEDDDAQPFLPSNAHAGPKVSWRHELMPLLNFGVIIGVALLLLWWYLHVAAGPDKGSAQDCPSGTKPYTIHQGDTCWDIAESHSVGVDDILTLNPELDCDKLSIGSQICLKD.

One can recognise a LysM domain in the interval lysine 125–leucine 169.

The protein belongs to the secreted LysM effector family.

Its function is as follows. Might have a role in sequestration of chitin oligosaccharides (breakdown products of fungal cell walls that are released during invasion and act as triggers of host immunity) to dampen host defense. The protein is Secreted LysM effector Blys4 of Beauveria bassiana (strain ARSEF 2860) (White muscardine disease fungus).